Consider the following 427-residue polypeptide: Fc receptor-like B (427 aa).

The N-terminal stretch at 1 to 17 (MWMLAALLLLVPRSGKA) is a signal peptide. 2 consecutive Ig-like C2-type domains span residues 23 to 101 (PVLT…LSVS) and 103 to 189 (DWLI…VAVT). Cystine bridges form between cysteine 44–cysteine 85 and cysteine 124–cysteine 168. A glycan (N-linked (GlcNAc...) asparagine) is linked at asparagine 152. A compositionally biased stretch (polar residues) spans 401-418 (TPETPNSHVTVNPATPET). The tract at residues 401-427 (TPETPNSHVTVNPATPETTVMEGRVDS) is disordered.

In terms of tissue distribution, expressed at low levels. Expressed in B-lymphocytes. Detected in spleen, lymph node, kidney, lung and brain.

Its subcellular location is the cytoplasm. It is found in the endoplasmic reticulum. In Mus musculus (Mouse), this protein is Fc receptor-like B (Fcrlb).